The chain runs to 305 residues: MLDTSIQALINKWQKYLVLQRNYSNHTVISYNNDLKHFLEFMNYYNSELVTINHIKTADIRLIRSWLAKRNCDNFTASSISRGLSAVKNFYRFLEKTTQLNSHIIFSIKSPKKTKLLPKALSEDDVVISLEHIEEYGNVKWVELRNKALLVLIYASGLRISEALSITKLHLQNLEFIRIIGKGSKERIIPWLPIAKNLITQYLEILPYKLGDNEPIFRGKQGKELQPSVFNRELIKLKHFYGLPQHLTAHSFRHSFASHLLEHGADLRSLQELLGHKSLSTTQNYTKTSIKHLEAVYTTAYPIKK.

Positions 4 to 95 (TSIQALINKW…AVKNFYRFLE (92 aa)) constitute a Core-binding (CB) domain. One can recognise a Tyr recombinase domain in the interval 116–298 (LLPKALSEDD…SIKHLEAVYT (183 aa)). Residues Arg-159, Lys-182, His-250, Arg-253, and His-276 contribute to the active site. The active-site O-(3'-phospho-DNA)-tyrosine intermediate is the Tyr-285.

Belongs to the 'phage' integrase family. XerC subfamily. In terms of assembly, forms a cyclic heterotetrameric complex composed of two molecules of XerC and two molecules of XerD.

It is found in the cytoplasm. Its function is as follows. Site-specific tyrosine recombinase, which acts by catalyzing the cutting and rejoining of the recombining DNA molecules. The XerC-XerD complex is essential to convert dimers of the bacterial chromosome into monomers to permit their segregation at cell division. It also contributes to the segregational stability of plasmids. This chain is Tyrosine recombinase XerC, found in Rickettsia peacockii (strain Rustic).